A 730-amino-acid polypeptide reads, in one-letter code: Elongation factor 2 (730 aa).

The tr-type G domain maps to 19-260 (DRIRNIGIVA…MVVKHLPNPL (242 aa)). GTP contacts are provided by residues 28–35 (AHIDHGKT), 94–98 (DTPGH), and 148–151 (NKVD). H597 carries the diphthamide modification.

It belongs to the TRAFAC class translation factor GTPase superfamily. Classic translation factor GTPase family. EF-G/EF-2 subfamily.

The protein localises to the cytoplasm. Functionally, catalyzes the GTP-dependent ribosomal translocation step during translation elongation. During this step, the ribosome changes from the pre-translocational (PRE) to the post-translocational (POST) state as the newly formed A-site-bound peptidyl-tRNA and P-site-bound deacylated tRNA move to the P and E sites, respectively. Catalyzes the coordinated movement of the two tRNA molecules, the mRNA and conformational changes in the ribosome. The protein is Elongation factor 2 of Methanoculleus marisnigri (strain ATCC 35101 / DSM 1498 / JR1).